We begin with the raw amino-acid sequence, 395 residues long: Flap endonuclease 1 (395 aa).

The tract at residues 1–104 (MGIKHLYQII…GELAKRIARK (104 aa)) is N-domain. Aspartate 34 contributes to the Mg(2+) binding site. Positions 47 and 70 each coordinate DNA. Aspartate 86 contacts Mg(2+). The tract at residues 103–123 (RKQEAAEQHEEAKETGTTEDV) is disordered. Positions 122-253 (DVEKFSRRTV…NTALKLIRDH (132 aa)) are I-domain. Residues glutamate 158, glutamate 160, aspartate 179, and aspartate 181 each contribute to the Mg(2+) site. Glutamate 158 contacts DNA. DNA contacts are provided by glycine 231 and aspartate 233. A Mg(2+)-binding site is contributed by aspartate 233. The interval 341 to 349 (QQSRLEGFF) is interaction with PCNA. A compositionally biased stretch (basic and acidic residues) spans 356 to 389 (DEEKASLKRKHEEKLEAAKKKKKEDAKAKREAKS). Residues 356 to 395 (DEEKASLKRKHEEKLEAAKKKKKEDAKAKREAKSRPKGTA) are disordered.

It belongs to the XPG/RAD2 endonuclease family. FEN1 subfamily. In terms of assembly, interacts with PCNA. Three molecules of FEN1 bind to one PCNA trimer with each molecule binding to one PCNA monomer. PCNA stimulates the nuclease activity without altering cleavage specificity. It depends on Mg(2+) as a cofactor. Phosphorylated. Phosphorylation upon DNA damage induces relocalization to the nuclear plasma.

The protein resides in the nucleus. It is found in the nucleolus. The protein localises to the nucleoplasm. Its subcellular location is the mitochondrion. Its function is as follows. Structure-specific nuclease with 5'-flap endonuclease and 5'-3' exonuclease activities involved in DNA replication and repair. During DNA replication, cleaves the 5'-overhanging flap structure that is generated by displacement synthesis when DNA polymerase encounters the 5'-end of a downstream Okazaki fragment. It enters the flap from the 5'-end and then tracks to cleave the flap base, leaving a nick for ligation. Also involved in the long patch base excision repair (LP-BER) pathway, by cleaving within the apurinic/apyrimidinic (AP) site-terminated flap. Acts as a genome stabilization factor that prevents flaps from equilibrating into structures that lead to duplications and deletions. Also possesses 5'-3' exonuclease activity on nicked or gapped double-stranded DNA, and exhibits RNase H activity. Also involved in replication and repair of rDNA and in repairing mitochondrial DNA. In Uncinocarpus reesii (strain UAMH 1704), this protein is Flap endonuclease 1.